Consider the following 227-residue polypeptide: (S)-2-haloacid dehalogenase 1 (227 aa).

The active-site Nucleophile is Asp10. An (S)-2-haloacid-binding positions include Ala11–Tyr12, Arg41, and Ser118–Asn119. The segment at Ser175–Asp180 is important for catalytic activity.

The protein belongs to the HAD-like hydrolase superfamily. S-2-haloalkanoic acid dehalogenase family.

The catalysed reaction is an (S)-2-haloacid + H2O = a (2R)-2-hydroxycarboxylate + a halide anion + H(+). The enzyme catalyses (S)-2-chloropropanoate + H2O = (R)-lactate + chloride + H(+). Catalyzes the hydrolytic dehalogenation of small (S)-2-haloalkanoic acids to yield the corresponding (R)-2-hydroxyalkanoic acids. Acts on acids of short chain lengths, C(2) to C(4), with inversion of configuration at C-2. Active with 2-halogenated carboxylic acids and converts only the S-isomer (or L-isomer) of 2-chloropropionic acid with inversion of configuration to produce R-lactate (or D-isomer). The chain is (S)-2-haloacid dehalogenase 1 from Pseudomonas sp. (strain CBS-3).